A 228-amino-acid chain; its full sequence is Lipoprotein-releasing system ATP-binding protein LolD (228 aa).

The 224-residue stretch at 5 to 228 (LRCHQVCKTY…DGLLTDITGA (224 aa)) folds into the ABC transporter domain. Residue 41–48 (GSSGSGKS) participates in ATP binding.

Belongs to the ABC transporter superfamily. Lipoprotein translocase (TC 3.A.1.125) family. As to quaternary structure, the complex is composed of two ATP-binding proteins (LolD) and two transmembrane proteins (LolC and LolE).

It is found in the cell inner membrane. Its function is as follows. Part of the ABC transporter complex LolCDE involved in the translocation of mature outer membrane-directed lipoproteins, from the inner membrane to the periplasmic chaperone, LolA. Responsible for the formation of the LolA-lipoprotein complex in an ATP-dependent manner. In Vibrio cholerae serotype O1 (strain ATCC 39315 / El Tor Inaba N16961), this protein is Lipoprotein-releasing system ATP-binding protein LolD.